The following is a 154-amino-acid chain: Large-conductance mechanosensitive channel (154 aa).

Transmembrane regions (helical) follow at residues 14–34 (VVDL…VNSL) and 86–106 (VFIN…FFVV).

The protein belongs to the MscL family. As to quaternary structure, homopentamer.

The protein resides in the cell membrane. In terms of biological role, channel that opens in response to stretch forces in the membrane lipid bilayer. May participate in the regulation of osmotic pressure changes within the cell. This is Large-conductance mechanosensitive channel from Dehalococcoides mccartyi (strain CBDB1).